The following is a 729-amino-acid chain: Capsid protein VP1 (729 aa).

Positions 1-10 (MAPPAKRAKR) are enriched in basic residues. Disordered stretches follow at residues 1-38 (MAPPAKRAKRGWVPPGYKYLGPGNSLDQGEPTNPSDAA), 96-115 (LATDSEPGTSGVSRAGKRTR), and 130-185 (KLTS…VGVS). Positions 4–13 (PAKRAKRGWV) match the Nuclear localization signal motif. The tract at residues 19–64 (YLGPGNSLDQGEPTNPSDAAAKEHDEAYDQYIKSGKNPYLYFSAAD) is phospholipase A2-like. Residues 25-35 (SLDQGEPTNPS) are compositionally biased toward polar residues. Residues 132-142 (TSSAAQQSSQT) show a composition bias toward low complexity. Residues 143–152 (MSDGTSQPDS) show a composition bias toward polar residues. Gly residues predominate over residues 168 to 184 (GPGGSGGGGSGGGGVGV). N325 is a Mg(2+) binding site.

This sequence belongs to the parvoviridae capsid protein family.

Its subcellular location is the virion. The protein resides in the host nucleus. Functionally, capsid protein self-assembles to form an icosahedral capsid with a T=1 symmetry, about 22 nm in diameter, and consisting of 60 copies of two size variants of the capsid proteins, VP1 and VP2, which differ by the presence of an N-terminal extension in the minor protein VP1. The capsid encapsulates the genomic ssDNA. Capsid proteins are responsible for the attachment to host cell receptors. This attachment induces virion internalization predominantly through clathrin-dependent endocytosis. Binding to the host receptors also induces capsid rearrangements leading to surface exposure of VP1 N-terminus, specifically its phospholipase A2-like region and putative nuclear localization signal(s). VP1 N-terminus might serve as a lipolytic enzyme to breach the endosomal membrane during entry into host cell and might contribute to virus transport to the nucleus. In Mus musculus (Mouse), this protein is Capsid protein VP1.